Consider the following 1196-residue polypeptide: DNA-directed RNA polymerase subunit beta (1196 aa).

It belongs to the RNA polymerase beta chain family. In terms of assembly, the RNAP catalytic core consists of 2 alpha, 1 beta, 1 beta' and 1 omega subunit. When a sigma factor is associated with the core the holoenzyme is formed, which can initiate transcription.

The catalysed reaction is RNA(n) + a ribonucleoside 5'-triphosphate = RNA(n+1) + diphosphate. In terms of biological role, DNA-dependent RNA polymerase catalyzes the transcription of DNA into RNA using the four ribonucleoside triphosphates as substrates. The protein is DNA-directed RNA polymerase subunit beta of Lactococcus lactis subsp. lactis (strain IL1403) (Streptococcus lactis).